We begin with the raw amino-acid sequence, 159 residues long: Putative pre-16S rRNA nuclease (159 aa).

This sequence belongs to the YqgF nuclease family.

It is found in the cytoplasm. Its function is as follows. Could be a nuclease involved in processing of the 5'-end of pre-16S rRNA. The sequence is that of Putative pre-16S rRNA nuclease from Synechococcus sp. (strain JA-3-3Ab) (Cyanobacteria bacterium Yellowstone A-Prime).